We begin with the raw amino-acid sequence, 442 residues long: Trigger factor (442 aa).

In terms of domain architecture, PPIase FKBP-type spans 162-247 (GDTVTIDYKG…IHEVKSKQLP (86 aa)).

Belongs to the FKBP-type PPIase family. Tig subfamily.

It localises to the cytoplasm. It catalyses the reaction [protein]-peptidylproline (omega=180) = [protein]-peptidylproline (omega=0). Functionally, involved in protein export. Acts as a chaperone by maintaining the newly synthesized protein in an open conformation. Functions as a peptidyl-prolyl cis-trans isomerase. This chain is Trigger factor, found in Lactobacillus acidophilus (strain ATCC 700396 / NCK56 / N2 / NCFM).